We begin with the raw amino-acid sequence, 1266 residues long: Kinesin-like protein KIN-12G (1266 aa).

The disordered stretch occupies residues Met1–Gln22. In terms of domain architecture, Kinesin motor spans Asn32–Ile369. An ATP-binding site is contributed by Gly113–Thr120. Coiled coils occupy residues Met613–Val668, Arg817–Lys854, Ala1029–Val1060, and Ser1084–His1120.

The protein belongs to the TRAFAC class myosin-kinesin ATPase superfamily. Kinesin family. KIN-12 subfamily.

In Oryza sativa subsp. japonica (Rice), this protein is Kinesin-like protein KIN-12G.